Reading from the N-terminus, the 430-residue chain is MAVAPAGGQHAPALEALLGAGALRLLDSSQIVIISTAPDVGAPQLPAAPPTGPRDSDVLLFATPQAPRPAPSAPRPALGRPPVKRRLDLETDHQYLAGSSGPFRGRGRHPGKGVKSPGEKSRYETSLNLTTKRFLELLSRSADGVVDLNWAAEVLKVQKRRIYDITNVLEGIQLIAKKSKNHIQWLGSHTMVGIGKRLEGLTQDLQQLQESEQQLDHLMHICTTQLQLLSEDSDTQRLAYVTCQDLRSIADPAEQMVIVIKAPPETQLQAVDSSETFQISLKSKQGPIDVFLCPEESADGISPGKTSCQETSSGEDRTADSGPAGPPPSPPSTSPALDPSQSLLGLEQEAVLPRMGHLRVPMEEDQLSPLVAADSLLEHVKEDFSGLLPGEFISLSPPHEALDYHFGLEEGEGIRDLFDCDFGDLTPLDF.

The segment at 62–103 is cyclin A:CDK2 binding; sequence ATPQAPRPAPSAPRPALGRPPVKRRLDLETDHQYLAGSSGPF. Positions 84-186 are interaction with BIRC2/c-IAP1; the sequence is KRRLDLETDH…KKSKNHIQWL (103 aa). The tract at residues 95 to 123 is disordered; sequence YLAGSSGPFRGRGRHPGKGVKSPGEKSRY. A DNA-binding region spans residues 105-189; it reads GRGRHPGKGV…KNHIQWLGSH (85 aa). N6-acetyllysine is present on residues K112, K115, and K120. The segment at 148-169 is leucine-zipper; it reads LNWAAEVLKVQKRRIYDITNVL. The DEF box signature appears at 153 to 189; it reads EVLKVQKRRIYDITNVLEGIQLIAKKSKNHIQWLGSH. K180 is subject to N6-methyllysine; by SETD7. Residues 187 to 375 are required for interaction with TRIM28; the sequence is GSHTMVGIGK…QLSPLVAADS (189 aa). Residues 190–279 form a dimerization region; sequence TMVGIGKRLE…AVDSSETFQI (90 aa). A disordered region spans residues 294-340; it reads PEESADGISPGKTSCQETSSGEDRTADSGPAGPPPSPPSTSPALDPS. Residues 324–333 show a composition bias toward pro residues; the sequence is AGPPPSPPST. Residues 361 to 430 are transactivation; it reads PMEEDQLSPL…DFGDLTPLDF (70 aa). S368 and S396 each carry phosphoserine. Positions 402–419 are RB1 binding; sequence LDYHFGLEEGEGIRDLFD. T426 is modified (phosphothreonine).

It belongs to the E2F/DP family. Component of the DRTF1/E2F transcription factor complex. Forms heterodimers with DP family members. The E2F1 complex binds specifically hypophosphorylated RB1, the interaction represses E2F1-driven transcription. During the cell cycle, RB1 becomes phosphorylated in mid-to-late G1 phase, detaches from the DRTF1/E2F complex, rendering E2F transcriptionally active. Interacts with TRRAP, which probably mediates its interaction with histone acetyltransferase complexes, leading to transcription activation. Binds TOPBP1 and EAPP. Interacts with ARID3A. Interacts with TRIM28; the interaction inhibits E2F1 acetylation through recruiting HDAC1 and represses its transcriptional activity. Interaction with KAT2B; the interaction acetylates E2F1 enhancing its DNA-binding and transcriptional activity. Interacts with BIRC2/c-IAP1 (via BIR domains). The complex TFDP1:E2F1 interacts with CEBPA; the interaction prevents CEBPA binding to target genes promoters and represses its transcriptional activity. Interacts with RRP1B. Interacts with HCFC1. Interacts with KMT2E; the interaction is probably indirect and is mediated via HCFC1. Interacts with DCAF5 and L3MBTL3; the interaction requires methylation at Lys-180 and is necessary to target E2F1 for ubiquitination by the CRL4-DCAF5 E3 ubiquitin ligase complex. In terms of processing, phosphorylated by CDK2 and cyclin A-CDK2 in the S-phase. Phosphorylation by CHEK2 stabilizes E2F1 upon DNA damage and regulates its effect on transcription and apoptosis. Phosphorylation at Ser-396 by GSK3B promotes interaction with USP11, leading to its deubiquitination and stabilization. Ubiquitinated via 'Lys-63'-linked ubiquitin, leading to its degradation. Deubiquitinated by USP11 following phosphorylation by GSK3B, promoting its stability. Post-translationally, acetylation stimulates DNA-binding. Enhanced under stress conditions such as DNA damage and inhibited by retinoblastoma protein RB1. Regulated by KAP1/TRIM28 which recruits HDAC1 to E2F1 resulting in deacetylation. Acetylated by P/CAF/KAT2B. In terms of processing, methylation at Lys-180 by SETD7 promotes E2F1 ubiquitin-dependent proteasomal degradation.

The protein resides in the nucleus. BIRC2/c-IAP1 stimulates its transcriptional activity. Transcription activator that binds DNA cooperatively with DP proteins through the E2 recognition site, 5'-TTTC[CG]CGC-3' found in the promoter region of a number of genes whose products are involved in cell cycle regulation or in DNA replication. The DRTF1/E2F complex functions in the control of cell-cycle progression from G1 to S phase. E2F1 binds preferentially RB1 in a cell-cycle dependent manner. It can mediate both cell proliferation and TP53/p53-dependent apoptosis. Blocks adipocyte differentiation by binding to specific promoters repressing CEBPA binding to its target gene promoters. Directly activates transcription of PEG10. Positively regulates transcription of RRP1B. This chain is Transcription factor E2F1, found in Mus musculus (Mouse).